The primary structure comprises 406 residues: 1-deoxy-D-xylulose 5-phosphate reductoisomerase (406 aa).

Threonine 21, glycine 22, serine 23, isoleucine 24, glycine 47, glutamine 50, and asparagine 127 together coordinate NADPH. Lysine 128 provides a ligand contact to 1-deoxy-D-xylulose 5-phosphate. Glutamate 129 provides a ligand contact to NADPH. A Mn(2+)-binding site is contributed by aspartate 151. 1-deoxy-D-xylulose 5-phosphate-binding residues include serine 152, glutamate 153, serine 177, and histidine 200. Residue glutamate 153 coordinates Mn(2+). Glycine 206 is an NADPH binding site. Positions 213, 218, 219, and 222 each coordinate 1-deoxy-D-xylulose 5-phosphate. Residue glutamate 222 participates in Mn(2+) binding.

It belongs to the DXR family. Mg(2+) is required as a cofactor. Requires Mn(2+) as cofactor.

The enzyme catalyses 2-C-methyl-D-erythritol 4-phosphate + NADP(+) = 1-deoxy-D-xylulose 5-phosphate + NADPH + H(+). The protein operates within isoprenoid biosynthesis; isopentenyl diphosphate biosynthesis via DXP pathway; isopentenyl diphosphate from 1-deoxy-D-xylulose 5-phosphate: step 1/6. Catalyzes the NADPH-dependent rearrangement and reduction of 1-deoxy-D-xylulose-5-phosphate (DXP) to 2-C-methyl-D-erythritol 4-phosphate (MEP). The protein is 1-deoxy-D-xylulose 5-phosphate reductoisomerase of Mycobacterium leprae (strain Br4923).